The chain runs to 401 residues: NADH-quinone oxidoreductase subunit D 2 (401 aa).

This sequence belongs to the complex I 49 kDa subunit family. As to quaternary structure, NDH-1 is composed of 14 different subunits. Subunits NuoB, C, D, E, F, and G constitute the peripheral sector of the complex.

It is found in the cell inner membrane. The enzyme catalyses a quinone + NADH + 5 H(+)(in) = a quinol + NAD(+) + 4 H(+)(out). Functionally, NDH-1 shuttles electrons from NADH, via FMN and iron-sulfur (Fe-S) centers, to quinones in the respiratory chain. The immediate electron acceptor for the enzyme in this species is believed to be ubiquinone. Couples the redox reaction to proton translocation (for every two electrons transferred, four hydrogen ions are translocated across the cytoplasmic membrane), and thus conserves the redox energy in a proton gradient. This Thermodesulfovibrio yellowstonii (strain ATCC 51303 / DSM 11347 / YP87) protein is NADH-quinone oxidoreductase subunit D 2.